The sequence spans 116 residues: Peptidyl-tRNA hydrolase (116 aa).

It belongs to the PTH2 family.

The protein resides in the cytoplasm. It catalyses the reaction an N-acyl-L-alpha-aminoacyl-tRNA + H2O = an N-acyl-L-amino acid + a tRNA + H(+). Its function is as follows. The natural substrate for this enzyme may be peptidyl-tRNAs which drop off the ribosome during protein synthesis. The polypeptide is Peptidyl-tRNA hydrolase (Methanococcus vannielii (strain ATCC 35089 / DSM 1224 / JCM 13029 / OCM 148 / SB)).